A 360-amino-acid polypeptide reads, in one-letter code: Diacylglycerol O-acyltransferase 3 (360 aa).

Residues 153 to 182 are disordered; that stretch reads KAKAMKKMTEMDSESSSSSESSDSDCDKGK. Residues C265, C270, C298, and C302 each contribute to the [2Fe-2S] cluster site.

Belongs to the diacylglycerol acyltransferase family. [2Fe-2S] cluster is required as a cofactor.

It carries out the reaction an acyl-CoA + a 1,2-diacyl-sn-glycerol = a triacyl-sn-glycerol + CoA. It functions in the pathway glycerolipid metabolism; triacylglycerol biosynthesis. Involved in triacylglycerol (TAG) biosynthesis. Catalyzes the acylation of the sn-3 hydroxy group of sn-1,2-diacylglycerol using acyl-CoA. May preferentially use linolenoyl-CoA as substrate and to a lesser extent linoleoyl-CoA. May contribute to the active recycling of linoleate and linolenate into TAG when seed oil breakdown is blocked. This chain is Diacylglycerol O-acyltransferase 3, found in Arabidopsis thaliana (Mouse-ear cress).